Consider the following 171-residue polypeptide: MANPRNEAALAELKARFAETDTVVLTEYRGLTVAQTTELRKALGFDVQYSVAKNTLVKIAANEAGVEGLDDLLTGPTAVAFIKGEAVDTAKVLKKFGEENKAFVVKGGYMDGNALTAEQVNAIAELDNRETTLAKLAGAMKGSLAKAAGLFNAPASQVARLAVALQDKKDA.

Belongs to the universal ribosomal protein uL10 family. Part of the ribosomal stalk of the 50S ribosomal subunit. The N-terminus interacts with L11 and the large rRNA to form the base of the stalk. The C-terminus forms an elongated spine to which L12 dimers bind in a sequential fashion forming a multimeric L10(L12)X complex.

Its function is as follows. Forms part of the ribosomal stalk, playing a central role in the interaction of the ribosome with GTP-bound translation factors. In Corynebacterium glutamicum (strain ATCC 13032 / DSM 20300 / JCM 1318 / BCRC 11384 / CCUG 27702 / LMG 3730 / NBRC 12168 / NCIMB 10025 / NRRL B-2784 / 534), this protein is Large ribosomal subunit protein uL10.